The following is a 739-amino-acid chain: Poly(A) polymerase alpha (739 aa).

A compositionally biased stretch (low complexity) spans 1–17; the sequence is MPFPVTTQGSQQTQPPQ. The segment at 1 to 22 is disordered; the sequence is MPFPVTTQGSQQTQPPQRHYGI. Phosphoserine is present on residues Ser10 and Ser24. ATP contacts are provided by residues 100 to 102, Thr109, 113 to 115, Asp167, Lys228, Tyr237, and 246 to 247; these read FGS, DID, and GV. Asp113, Asp115, and Asp167 together coordinate Mg(2+). Glycyl lysine isopeptide (Lys-Gly) (interchain with G-Cter in SUMO) cross-links involve residues Lys444, Lys445, Lys506, and Lys507. The Nuclear localization signal 1 motif lies at 490–507; that stretch reads RKQLHQLLPSHVLQKRKK. Positions 508-643 are ser/Thr-rich; it reads HSTEGVKLTA…TKVPNPIVGV (136 aa). Over residues 523–534 the composition is skewed to low complexity; sequence LDLSMDSDNSMS. Residues 523 to 725 are disordered; sequence LDLSMDSDNS…SDIPALPANP (203 aa). Polar residues predominate over residues 535-557; the sequence is VPSPTSAMKTSPLNSSGSSQGRN. Ser537 carries the phosphoserine; by MAPK modification. At Ser558 the chain carries Phosphoserine. The span at 566-582 shows a compositional bias: polar residues; it reads ASVTSIQASEVSVPQAN. Low complexity-rich tracts occupy residues 583–594 and 611–622; these read SSESPGGPSSES and TVSRVVSSTRLV. N6-acetyllysine is present on residues Lys635 and Lys644. Positions 644 to 659 match the Nuclear localization signal 2 motif; it reads KRTSSPNKEESPKKTK. 2 stretches are compositionally biased toward basic and acidic residues: residues 650–660 and 676–686; these read NKEESPKKTKT and GHDKTETKEQV. The required for interaction with NUDT21 stretch occupies residues 671-739; sequence CLALSGHDKT…KNSIKLRLNR (69 aa). Residues 691-715 show a composition bias toward polar residues; it reads SAVQSETVPASASLLASQKTSSTDL. An N6-acetyllysine; alternate modification is found at Lys730. A Glycyl lysine isopeptide (Lys-Gly) (interchain with G-Cter in SUMO); alternate cross-link involves residue Lys730. Ser732 is subject to Phosphoserine. Lys734 carries the N6-acetyllysine; alternate modification. Lys734 participates in a covalent cross-link: Glycyl lysine isopeptide (Lys-Gly) (interchain with G-Cter in SUMO); alternate.

Belongs to the poly(A) polymerase family. As to quaternary structure, monomer. Found in a complex with CPSF1, FIP1L1 and PAPOLA. Interacts with AHCYL1 and FIP1L1; the interaction with AHCYL1 seems to increase interaction with FIP1L1. Interacts with NUDT21; the interaction is diminished by acetylation. Interacts with KPNB1; the interaction promotes PAP nuclear import and is inhibited by acetylation of PAP. It depends on Mg(2+) as a cofactor. Mn(2+) is required as a cofactor. Polysumoylated. Varying sumoylation depending on tissue- and cell-type. Highly sumoylated in bladder and NIH 3T3 cells. Sumoylation is required for nuclear localization and enhances PAP stability. Desumoylated by SENP1. Inhibits polymerase activity. Post-translationally, hyperphosphorylation on multiple CDK2 consensus and non-consensus sites in the C-terminal Ser/Thr-rich region represses PAP activity in late M-phase. Phosphorylation/dephosphorylation may regulate the interaction between PAP and CPSF. In terms of processing, acetylated in the C-terminus. Acetylation decreases interaction with NUDT21 and KPNB1, and inhibits nuclear localization through inhibiting binding to the importin alpha/beta complex. In terms of tissue distribution, expressed in brain, thymus, lung, kidney, bladder, testis and spleen.

It is found in the nucleus. It catalyses the reaction RNA(n) + ATP = RNA(n)-3'-adenine ribonucleotide + diphosphate. Functionally, polymerase that creates the 3'-poly(A) tail of mRNA's. Also required for the endoribonucleolytic cleavage reaction at some polyadenylation sites. May acquire specificity through interaction with a cleavage and polyadenylation specificity factor (CPSF) at its C-terminus. The polypeptide is Poly(A) polymerase alpha (Papola) (Mus musculus (Mouse)).